The chain runs to 226 residues: Ribose-5-phosphate isomerase A (226 aa).

Residues 26–29, 82–85, and 95–98 contribute to the substrate site; these read TGST, DGAD, and KGGG. The Proton acceptor role is filled by glutamate 104. Lysine 122 is a binding site for substrate.

This sequence belongs to the ribose 5-phosphate isomerase family. Homodimer.

It carries out the reaction aldehydo-D-ribose 5-phosphate = D-ribulose 5-phosphate. Its pathway is carbohydrate degradation; pentose phosphate pathway; D-ribose 5-phosphate from D-ribulose 5-phosphate (non-oxidative stage): step 1/1. Functionally, catalyzes the reversible conversion of ribose-5-phosphate to ribulose 5-phosphate. The sequence is that of Ribose-5-phosphate isomerase A from Streptococcus thermophilus (strain CNRZ 1066).